Here is a 423-residue protein sequence, read N- to C-terminus: Adenylosuccinate synthetase (423 aa).

Residues 12-18 and 40-42 each bind GTP; these read GDEGKGK and GHT. Asp13 (proton acceptor) is an active-site residue. Positions 13 and 40 each coordinate Mg(2+). IMP contacts are provided by residues 13–16, 38–41, Thr129, Arg143, Gln224, Thr239, and Arg303; these read DEGK and NAGH. The Proton donor role is filled by His41. 299-305 contributes to the substrate binding site; that stretch reads ATTGRKR. GTP contacts are provided by residues Arg305, 331-333, and 412-414; these read KGD and SVG.

The protein belongs to the adenylosuccinate synthetase family. As to quaternary structure, homodimer. Mg(2+) is required as a cofactor.

Its subcellular location is the cytoplasm. The enzyme catalyses IMP + L-aspartate + GTP = N(6)-(1,2-dicarboxyethyl)-AMP + GDP + phosphate + 2 H(+). Its pathway is purine metabolism; AMP biosynthesis via de novo pathway; AMP from IMP: step 1/2. Plays an important role in the de novo pathway of purine nucleotide biosynthesis. Catalyzes the first committed step in the biosynthesis of AMP from IMP. The polypeptide is Adenylosuccinate synthetase (Christiangramia forsetii (strain DSM 17595 / CGMCC 1.15422 / KT0803) (Gramella forsetii)).